A 421-amino-acid chain; its full sequence is Probable tRNA N6-adenosine threonylcarbamoyltransferase, mitochondrial (421 aa).

The transit peptide at 1–22 (MNIPKILNNNLVLKRIFCRNYS) directs the protein to the mitochondrion. His133 and His137 together coordinate a divalent metal cation. Residues 156-160 (LLSGG), Asp189, Gly208, Glu212, 308-309 (AN), and Thr336 each bind substrate. Residue Asp337 participates in a divalent metal cation binding.

The protein belongs to the KAE1 / TsaD family. In terms of assembly, homodimer. It depends on a divalent metal cation as a cofactor.

Its subcellular location is the mitochondrion. It carries out the reaction L-threonylcarbamoyladenylate + adenosine(37) in tRNA = N(6)-L-threonylcarbamoyladenosine(37) in tRNA + AMP + H(+). Its function is as follows. Required for the formation of a threonylcarbamoyl group on adenosine at position 37 (t(6)A37) in mitochondrial tRNAs that read codons beginning with adenine. Probably involved in the transfer of the threonylcarbamoyl moiety of threonylcarbamoyl-AMP (TC-AMP) to the N6 group of A37. Involved in mitochondrial genome maintenance. The sequence is that of Probable tRNA N6-adenosine threonylcarbamoyltransferase, mitochondrial from Caenorhabditis elegans.